A 426-amino-acid chain; its full sequence is Divalent metal cation transporter MntH (426 aa).

10 helical membrane passes run 31-51 (WYLLGPAFVAAIAYVDPGNVA), 58-78 (AQFGYLQLWVVVVANVLAGLV), 134-156 (ILFRVSLLLGGVITGTVSLLLLM), 169-189 (VITGLLFVIVVGFTSSFFVAT), 208-228 (SVLLAAAIIGATVMPHAVYLH), 256-276 (VILAMTIAGIVNTAMLLVAAI), 298-318 (LGATIAMLFAIGLLASSLASA), 337-357 (IPMLIRRLITLCPAIAILALG), 363-383 (ALVLSQIVLSFGIPFAVLPLV), and 402-422 (TVLGWAVAILVSLLNVVLIYL).

The protein belongs to the NRAMP family.

The protein resides in the cell membrane. H(+)-stimulated, divalent metal cation uptake system. In Mycobacterium leprae (strain TN), this protein is Divalent metal cation transporter MntH.